A 97-amino-acid polypeptide reads, in one-letter code: MTSFPTTPPPAEELMATTILQATEALSPEAEASTALIAVVITVVFLTLLSVVILIFFYLYKNKGSYVTYEPADGEPGAVVLMENDSAKGREKEEYFI.

Topologically, residues 1–36 (MTSFPTTPPPAEELMATTILQATEALSPEAEASTAL) are extracellular. Residue T2 is glycosylated (O-linked (GalNAc...) threonine). The O-linked (GalNAc...) serine glycan is linked to S3. O-linked (GalNAc...) threonine glycans are attached at residues T6, T7, T17, T18, and T23. The chain crosses the membrane as a helical; Signal-anchor for type III membrane protein span at residues 37 to 57 (IAVVITVVFLTLLSVVILIFF). Over 58–97 (YLYKNKGSYVTYEPADGEPGAVVLMENDSAKGREKEEYFI) the chain is Cytoplasmic.

It belongs to the SMAGP family. In terms of processing, O-glycosylated. The O-glycan is modified with sialic acid residues.

It is found in the cell membrane. It localises to the cytoplasmic vesicle membrane. In terms of biological role, may play a role in epithelial cell-cell contacts. May play a role in tumor invasiveness and metastasis formation. This is Small cell adhesion glycoprotein (SMAGP) from Bos taurus (Bovine).